The following is a 237-amino-acid chain: Ribosomal RNA small subunit methyltransferase G (237 aa).

S-adenosyl-L-methionine contacts are provided by residues G75, F80, 127-128 (AE), and R146.

The protein belongs to the methyltransferase superfamily. RNA methyltransferase RsmG family.

It localises to the cytoplasm. Functionally, specifically methylates the N7 position of a guanine in 16S rRNA. This is Ribosomal RNA small subunit methyltransferase G from Synechococcus sp. (strain RCC307).